The following is a 201-amino-acid chain: Phospholipase A2 inhibitor NAI (201 aa).

Residues methionine 1–cysteine 19 form the signal peptide. 8 cysteine pairs are disulfide-bonded: cysteine 22–cysteine 47, cysteine 25–cysteine 32, cysteine 40–cysteine 68, cysteine 74–cysteine 95, cysteine 96–cysteine 101, cysteine 119–cysteine 144, cysteine 137–cysteine 166, and cysteine 170–cysteine 191. N-linked (GlcNAc...) asparagine glycosylation is present at asparagine 176.

The protein belongs to the CNF-like-inhibitor family. As to quaternary structure, heterotrimer of 2 subunits A and 1 subunit B; non-covalently linked. N-glycosylated, probably by biantennary structure. Glycosylation does not change PLA2 inhibitory activity. In terms of tissue distribution, expressed by the liver.

The protein localises to the secreted. Inhibits the enzymatic activity of all phospholipase A2 tested, binding them with micromole to nanomole affinity. The protein is Phospholipase A2 inhibitor NAI of Notechis ater (Black tiger snake).